Consider the following 160-residue polypeptide: uncharacterized protein (160 aa).

The stretch at asparagine 69–arginine 145 forms a coiled coil. Disordered regions lie at residues glycine 82 to alanine 109 and lysine 129 to lysine 160. Over residues glutamine 86 to glutamine 99 the composition is skewed to basic residues. Residues isoleucine 133 to tyrosine 146 show a composition bias toward basic and acidic residues. Basic residues predominate over residues methionine 147–lysine 160.

This is an uncharacterized protein from Bacillus subtilis (strain 168).